A 54-amino-acid chain; its full sequence is Protein YojO (54 aa).

This sequence belongs to the YojO family.

The polypeptide is Protein YojO (yojO) (Escherichia coli (strain K12)).